The primary structure comprises 324 residues: MKPSVILYKALPDDLLQRLQEHFTVHQVANLSPQTVEQNAAIFAEAEGLLGSNENVDAALLEKMPKLRATSTISVGYDNFDVDALTARKILLMHTPTVLTETVADTLMALVLSTARRVVEVAERVKAGGWTASIGPDWYGTDVHHKTLGIVGMGRIGMALAQRAHFGFNMPILYNARRHHKEAEERFNARYCDLDTLLQESDFVCLILPLTDETHHLFGAEQFAKMKSSAIFINAGRGPVVDENALIAALQKGEIHAAGLDVFEQEPLSVDSPLLSMANVVAVPHIGSATHETRYGMAACAVDNLIDALQGKVEKNCVNPHVAD.

Catalysis depends on residues Arg-237 and Glu-266. The active-site Proton donor is the His-285.

This sequence belongs to the D-isomer specific 2-hydroxyacid dehydrogenase family. GhrB subfamily. In terms of assembly, homodimer.

The protein localises to the cytoplasm. It catalyses the reaction glycolate + NADP(+) = glyoxylate + NADPH + H(+). The enzyme catalyses (R)-glycerate + NAD(+) = 3-hydroxypyruvate + NADH + H(+). It carries out the reaction (R)-glycerate + NADP(+) = 3-hydroxypyruvate + NADPH + H(+). Functionally, catalyzes the NADPH-dependent reduction of glyoxylate and hydroxypyruvate into glycolate and glycerate, respectively. The polypeptide is Glyoxylate/hydroxypyruvate reductase B (Escherichia coli O9:H4 (strain HS)).